The primary structure comprises 468 residues: Ribosomal lysine N-methyltransferase 4 (468 aa).

Positions 22–302 (EKIGLNDYRH…KGEQLWNTYG (281 aa)) constitute an SET domain. The segment at 188–225 (ISNENEKSAAETSIKEDKNGDAAKKNEGSANQDDEKLH) is disordered. An S-adenosyl-L-methionine-binding site is contributed by Tyr301.

It belongs to the class V-like SAM-binding methyltransferase superfamily. Histone-lysine methyltransferase family. SETD6 subfamily.

Its subcellular location is the nucleus. Its function is as follows. S-adenosyl-L-methionine-dependent protein-lysine N-methyltransferase that monomethylates 60S ribosomal protein L42 (rpl42) at 'Lys-55'. The sequence is that of Ribosomal lysine N-methyltransferase 4 from Schizosaccharomyces pombe (strain 972 / ATCC 24843) (Fission yeast).